The chain runs to 91 residues: Small ribosomal subunit protein uS19 (91 aa).

The protein belongs to the universal ribosomal protein uS19 family.

Protein S19 forms a complex with S13 that binds strongly to the 16S ribosomal RNA. This chain is Small ribosomal subunit protein uS19, found in Metamycoplasma arthritidis (strain 158L3-1) (Mycoplasma arthritidis).